Here is a 105-residue protein sequence, read N- to C-terminus: Antitoxin YfjZ (105 aa).

The protein belongs to the CbeA/YafW/YfjZ antitoxin family.

Antitoxin component of a type IV toxin-antitoxin (TA) system. Antitoxin that counteracts the effect of cognate toxin YpjF. Also counteracts the effect of non-cognate toxins CbtA and YfkI. This is Antitoxin YfjZ (yfjZ) from Escherichia coli (strain K12).